The chain runs to 49 residues: Large ribosomal subunit protein bL33 (49 aa).

This sequence belongs to the bacterial ribosomal protein bL33 family.

In Streptococcus gordonii (strain Challis / ATCC 35105 / BCRC 15272 / CH1 / DL1 / V288), this protein is Large ribosomal subunit protein bL33.